An 83-amino-acid chain; its full sequence is MAEAATTDVKKLSFERALEELETIVKRLEDGKVPLEESVTIYERGEALKRRCEDLLRQAEARVDKITTDAQGAPTGTEPLDVQ.

The protein belongs to the XseB family. In terms of assembly, heterooligomer composed of large and small subunits.

The protein resides in the cytoplasm. The enzyme catalyses Exonucleolytic cleavage in either 5'- to 3'- or 3'- to 5'-direction to yield nucleoside 5'-phosphates.. Functionally, bidirectionally degrades single-stranded DNA into large acid-insoluble oligonucleotides, which are then degraded further into small acid-soluble oligonucleotides. This is Exodeoxyribonuclease 7 small subunit from Rhodopseudomonas palustris (strain ATCC BAA-98 / CGA009).